A 264-amino-acid polypeptide reads, in one-letter code: Thymidylate synthase (264 aa).

Position 21 (arginine 21) interacts with dUMP. (6R)-5,10-methylene-5,6,7,8-tetrahydrofolate is bound at residue histidine 51. DUMP is bound at residue 126–127 (RR). Cysteine 146 serves as the catalytic Nucleophile. DUMP-binding positions include 166 to 169 (RSCD), asparagine 177, and 207 to 209 (HLY). Aspartate 169 contributes to the (6R)-5,10-methylene-5,6,7,8-tetrahydrofolate binding site. Serine 263 lines the (6R)-5,10-methylene-5,6,7,8-tetrahydrofolate pocket.

The protein belongs to the thymidylate synthase family. Bacterial-type ThyA subfamily. As to quaternary structure, homodimer.

The protein localises to the cytoplasm. The enzyme catalyses dUMP + (6R)-5,10-methylene-5,6,7,8-tetrahydrofolate = 7,8-dihydrofolate + dTMP. It functions in the pathway pyrimidine metabolism; dTTP biosynthesis. Catalyzes the reductive methylation of 2'-deoxyuridine-5'-monophosphate (dUMP) to 2'-deoxythymidine-5'-monophosphate (dTMP) while utilizing 5,10-methylenetetrahydrofolate (mTHF) as the methyl donor and reductant in the reaction, yielding dihydrofolate (DHF) as a by-product. This enzymatic reaction provides an intracellular de novo source of dTMP, an essential precursor for DNA biosynthesis. This is Thymidylate synthase from Buchnera aphidicola subsp. Acyrthosiphon pisum (strain Tuc7).